We begin with the raw amino-acid sequence, 194 residues long: dCTP deaminase (194 aa).

DCTP contacts are provided by residues 110–115 (RSSLAR), Asp-128, 136–138 (VLE), Tyr-171, Lys-178, and Gln-182. The active-site Proton donor/acceptor is Glu-138.

It belongs to the dCTP deaminase family. Homotrimer.

The enzyme catalyses dCTP + H2O + H(+) = dUTP + NH4(+). It functions in the pathway pyrimidine metabolism; dUMP biosynthesis; dUMP from dCTP (dUTP route): step 1/2. Its function is as follows. Catalyzes the deamination of dCTP to dUTP. This chain is dCTP deaminase, found in Histophilus somni (strain 2336) (Haemophilus somnus).